The primary structure comprises 117 residues: Small ribosomal subunit protein eS25 (117 aa).

The tract at residues 1-38 (MPPKKDAKSSAKQPQKTQKKKEGSGGGKAKKKKWSKGK) is disordered. Basic residues predominate over residues 28 to 37 (KAKKKKWSKG).

Belongs to the eukaryotic ribosomal protein eS25 family.

The sequence is that of Small ribosomal subunit protein eS25 (RpS25) from Drosophila melanogaster (Fruit fly).